Reading from the N-terminus, the 183-residue chain is Dual specificity protein phosphatase 22-B (183 aa).

Residues 4–144 (GINKVLPDLY…LQEFQTGELQ (141 aa)) form the Tyrosine-protein phosphatase domain. The active-site Phosphocysteine intermediate is Cys-88.

It belongs to the protein-tyrosine phosphatase family. Non-receptor class dual specificity subfamily.

It is found in the cytoplasm. It localises to the nucleus. It carries out the reaction O-phospho-L-tyrosyl-[protein] + H2O = L-tyrosyl-[protein] + phosphate. The enzyme catalyses O-phospho-L-seryl-[protein] + H2O = L-seryl-[protein] + phosphate. The catalysed reaction is O-phospho-L-threonyl-[protein] + H2O = L-threonyl-[protein] + phosphate. Functionally, activates the Jnk signaling pathway. Dephosphorylates and deactivates p38 and stress-activated protein kinase/c-Jun N-terminal kinase (SAPK/JNK). This is Dual specificity protein phosphatase 22-B (dusp22b) from Danio rerio (Zebrafish).